The following is a 76-amino-acid chain: Small ribosomal subunit protein bS16c (76 aa).

It belongs to the bacterial ribosomal protein bS16 family.

Its subcellular location is the plastid. The protein localises to the chloroplast. This chain is Small ribosomal subunit protein bS16c, found in Guillardia theta (Cryptophyte).